Here is a 983-residue protein sequence, read N- to C-terminus: UPF0182 protein KRH_08700 (983 aa).

The next 7 membrane-spanning stretches (helical) occupy residues Gly-22–Thr-42, Val-67–Trp-87, Val-116–Gln-136, Leu-172–His-192, Val-213–Asp-233, Gly-261–Gly-281, and Ile-288–Ile-308. Positions Gly-893–Thr-959 are disordered. Basic and acidic residues predominate over residues Gln-947–Thr-959.

Belongs to the UPF0182 family.

It is found in the cell membrane. The sequence is that of UPF0182 protein KRH_08700 from Kocuria rhizophila (strain ATCC 9341 / DSM 348 / NBRC 103217 / DC2201).